Consider the following 410-residue polypeptide: Arginine deiminase (410 aa).

Cys-400 (amidino-cysteine intermediate) is an active-site residue.

This sequence belongs to the arginine deiminase family.

The protein localises to the cytoplasm. It carries out the reaction L-arginine + H2O = L-citrulline + NH4(+). It participates in amino-acid degradation; L-arginine degradation via ADI pathway; carbamoyl phosphate from L-arginine: step 1/2. In Lactococcus lactis subsp. lactis (strain IL1403) (Streptococcus lactis), this protein is Arginine deiminase (arcA).